Here is a 73-residue protein sequence, read N- to C-terminus: UPF0154 protein LJ_1506 (73 aa).

A helical transmembrane segment spans residues 3–23 (LGLAIFLIIIALLIGLVGGFY).

The protein belongs to the UPF0154 family.

Its subcellular location is the cell membrane. In Lactobacillus johnsonii (strain CNCM I-12250 / La1 / NCC 533), this protein is UPF0154 protein LJ_1506.